Here is a 764-residue protein sequence, read N- to C-terminus: 5-methyltetrahydropteroyltriglutamate--homocysteine methyltransferase (764 aa).

Residues 17–20 (RELK) and Lys117 each bind 5-methyltetrahydropteroyltri-L-glutamate. Residues 437-439 (IGS) and Glu490 contribute to the L-homocysteine site. L-methionine contacts are provided by residues 437–439 (IGS) and Glu490. 5-methyltetrahydropteroyltri-L-glutamate is bound by residues 521-522 (RC) and Trp567. Position 605 (Asp605) interacts with L-homocysteine. Position 605 (Asp605) interacts with L-methionine. Glu611 is a 5-methyltetrahydropteroyltri-L-glutamate binding site. Zn(2+) contacts are provided by His647, Cys649, and Glu671. The Proton donor role is filled by His701. Residue Cys733 coordinates Zn(2+).

Belongs to the vitamin-B12 independent methionine synthase family. The cofactor is Zn(2+).

It catalyses the reaction 5-methyltetrahydropteroyltri-L-glutamate + L-homocysteine = tetrahydropteroyltri-L-glutamate + L-methionine. The protein operates within amino-acid biosynthesis; L-methionine biosynthesis via de novo pathway; L-methionine from L-homocysteine (MetE route): step 1/1. Functionally, catalyzes the transfer of a methyl group from 5-methyltetrahydrofolate to homocysteine resulting in methionine formation. The chain is 5-methyltetrahydropteroyltriglutamate--homocysteine methyltransferase from Blochmanniella pennsylvanica (strain BPEN).